A 255-amino-acid chain; its full sequence is 5-oxoprolinase subunit A (255 aa).

This sequence belongs to the LamB/PxpA family. In terms of assembly, forms a complex composed of PxpA, PxpB and PxpC.

It catalyses the reaction 5-oxo-L-proline + ATP + 2 H2O = L-glutamate + ADP + phosphate + H(+). In terms of biological role, catalyzes the cleavage of 5-oxoproline to form L-glutamate coupled to the hydrolysis of ATP to ADP and inorganic phosphate. This is 5-oxoprolinase subunit A from Clostridium kluyveri (strain ATCC 8527 / DSM 555 / NBRC 12016 / NCIMB 10680 / K1).